A 341-amino-acid polypeptide reads, in one-letter code: GTP 3',8-cyclase (341 aa).

A Radical SAM core domain is found at 11 to 231 (KRNRPLRDLR…DLINKHMPVE (221 aa)). Arginine 20 serves as a coordination point for GTP. [4Fe-4S] cluster contacts are provided by cysteine 27 and cysteine 31. Position 33 (tyrosine 33) interacts with S-adenosyl-L-methionine. [4Fe-4S] cluster is bound at residue cysteine 34. Arginine 75 serves as a coordination point for GTP. Position 79 (glycine 79) interacts with S-adenosyl-L-methionine. GTP is bound at residue threonine 106. Serine 130 provides a ligand contact to S-adenosyl-L-methionine. Lysine 167 is a binding site for GTP. Methionine 201 is an S-adenosyl-L-methionine binding site. [4Fe-4S] cluster contacts are provided by cysteine 265 and cysteine 268. Residue 270–272 (RAR) participates in GTP binding. A [4Fe-4S] cluster-binding site is contributed by cysteine 282.

The protein belongs to the radical SAM superfamily. MoaA family. Monomer and homodimer. Requires [4Fe-4S] cluster as cofactor.

It carries out the reaction GTP + AH2 + S-adenosyl-L-methionine = (8S)-3',8-cyclo-7,8-dihydroguanosine 5'-triphosphate + 5'-deoxyadenosine + L-methionine + A + H(+). It functions in the pathway cofactor biosynthesis; molybdopterin biosynthesis. Catalyzes the cyclization of GTP to (8S)-3',8-cyclo-7,8-dihydroguanosine 5'-triphosphate. Required for both nitrate assimilation and respiration. This Bacillus subtilis (strain 168) protein is GTP 3',8-cyclase.